Reading from the N-terminus, the 1045-residue chain is FERM, ARHGEF and pleckstrin domain-containing protein 1 (1045 aa).

A disordered region spans residues 1–37 (MGEIEQRPTPGSRLGAPENSGISTLERGQKPPPTPSG). Residues Ser20 and Ser23 each carry the phosphoserine modification. At Thr24 the chain carries Phosphothreonine. The FERM domain maps to 40 to 320 (VSIKIQMLDD…EHHAFFRLFE (281 aa)). Ser340, Ser373, Ser389, Ser403, Ser418, Ser427, and Ser433 each carry phosphoserine. The interval 361–534 (FERKHSKIHS…TDDEDEGRRK (174 aa)) is disordered. The segment covering 373–396 (SLASQPTELNSEVLEQSQQSTSLT) has biased composition (polar residues). Polar residues-rich tracts occupy residues 471–489 (TGSL…NSQG) and 496–511 (VTLS…QASP). Phosphoserine occurs at positions 510 and 514. The 191-residue stretch at 540-730 (KAYFIAKEVS…TEMVAQLHGT (191 aa)) folds into the DH domain. One can recognise a PH 1 domain in the interval 759 to 856 (EFIRLGSLSK…WVEDIQMAID (98 aa)). A phosphoserine mark is found at Ser833, Ser872, and Ser878. Residues 864-903 (PAPEFLASSPPDNKSPDEATAADQESEDDLSASRTSLERQ) form a disordered region. Phosphothreonine is present on Thr883. A phosphoserine mark is found at Ser889, Ser896, and Ser899. In terms of domain architecture, PH 2 spans 932-1029 (ENQLSGNLLR…WMEVIRSATS (98 aa)).

As to quaternary structure, interacts with CADM1. Interacts with RAC1. In terms of tissue distribution, detected in cAMP-treated chondrocytes, but not in untreated chondrocytes. Detected in fetal brain, heart and spleen, and in adult testis, kidney and lung.

It localises to the cell membrane. The protein localises to the synapse. Its subcellular location is the synaptosome. The protein resides in the cytoplasm. It is found in the cytosol. It localises to the cell projection. The protein localises to the filopodium. Its subcellular location is the dendrite. The protein resides in the dendritic spine. Functions as a guanine nucleotide exchange factor for RAC1. May play a role in semaphorin signaling. Plays a role in the assembly and disassembly of dendritic filopodia, the formation of dendritic spines, regulation of dendrite length and ultimately the formation of synapses. This is FERM, ARHGEF and pleckstrin domain-containing protein 1 (FARP1) from Homo sapiens (Human).